A 532-amino-acid polypeptide reads, in one-letter code: CTP synthase (532 aa).

An amidoligase domain region spans residues 1-267; that stretch reads MTKYIFVTGG…DDIVLEHLQL (267 aa). A CTP-binding site is contributed by S13. S13 serves as a coordination point for UTP. 14–19 contributes to the ATP binding site; sequence SIGKGI. Y54 contacts L-glutamine. D71 serves as a coordination point for ATP. Mg(2+) is bound by residues D71 and E141. CTP is bound by residues 148-150, 188-193, and K224; these read DIE and KTKPTQ. Residues 188–193 and K224 each bind UTP; that span reads KTKPTQ. The Glutamine amidotransferase type-1 domain maps to 292–532; it reads RIGLVGKYVS…DFVGAALKNK (241 aa). Residue G354 coordinates L-glutamine. C381 functions as the Nucleophile; for glutamine hydrolysis in the catalytic mechanism. L-glutamine contacts are provided by residues 382–385, E405, and R462; that span reads LGMQ. Catalysis depends on residues H507 and E509.

This sequence belongs to the CTP synthase family. In terms of assembly, homotetramer.

The catalysed reaction is UTP + L-glutamine + ATP + H2O = CTP + L-glutamate + ADP + phosphate + 2 H(+). The enzyme catalyses L-glutamine + H2O = L-glutamate + NH4(+). It carries out the reaction UTP + NH4(+) + ATP = CTP + ADP + phosphate + 2 H(+). It functions in the pathway pyrimidine metabolism; CTP biosynthesis via de novo pathway; CTP from UDP: step 2/2. With respect to regulation, allosterically activated by GTP, when glutamine is the substrate; GTP has no effect on the reaction when ammonia is the substrate. The allosteric effector GTP functions by stabilizing the protein conformation that binds the tetrahedral intermediate(s) formed during glutamine hydrolysis. Inhibited by the product CTP, via allosteric rather than competitive inhibition. In terms of biological role, catalyzes the ATP-dependent amination of UTP to CTP with either L-glutamine or ammonia as the source of nitrogen. Regulates intracellular CTP levels through interactions with the four ribonucleotide triphosphates. This Listeria monocytogenes serovar 1/2a (strain ATCC BAA-679 / EGD-e) protein is CTP synthase.